Consider the following 328-residue polypeptide: Arabinose 5-phosphate isomerase KdsD (328 aa).

Residues 42 to 184 (CEKMFWCKGK…AVALLKARGF (143 aa)) form the SIS domain. Residues 75 to 76 (GT), H82, H88, 114 to 123 (ALIPVLKRLH), 148 to 150 (KVA), T222, and D275 contribute to the substrate site. Residue H82 participates in Zn(2+) binding. A CBS 1 domain is found at 210-268 (MHTGDEIPHVKKTASLRDALLEVTRKNLGMTVICDDNMMIEGIFTDGDLRRVFDMGVDV). Residues 277–328 (MTPGGIRVRPGILAVEALNLMQSRHITSVMVADGDHLLGVLHMHDLLRAGVV) form the CBS 2 domain.

It belongs to the SIS family. GutQ/KpsF subfamily. As to quaternary structure, homotetramer.

The catalysed reaction is D-arabinose 5-phosphate = D-ribulose 5-phosphate. It participates in carbohydrate biosynthesis; 3-deoxy-D-manno-octulosonate biosynthesis; 3-deoxy-D-manno-octulosonate from D-ribulose 5-phosphate: step 1/3. Its pathway is bacterial outer membrane biogenesis; lipopolysaccharide biosynthesis. Completely inhibited by 10 uM of nickel, copper, cadmium and mercury ions. Inhibited by zinc with an IC(50) of 1-3 uM. Metal ion inhibition may be a mechanism to control activity in vivo. Functionally, involved in the biosynthesis of 3-deoxy-D-manno-octulosonate (KDO), a unique 8-carbon sugar component of lipopolysaccharides (LPSs). KdsD is not essential in the KDO biosynthesis and can be substituted by GutQ. Catalyzes the reversible aldol-ketol isomerization between D-ribulose 5-phosphate (Ru5P) and D-arabinose 5-phosphate (A5P). This Escherichia coli (strain K12) protein is Arabinose 5-phosphate isomerase KdsD (kdsD).